The following is a 336-amino-acid chain: Vacuolar protein sorting-associated protein 26B (336 aa).

Residues serine 302, serine 304, and serine 319 each carry the phosphoserine modification.

The protein belongs to the VPS26 family. Component of the heterotrimeric retromer cargo-selective complex (CSC), also described as vacuolar protein sorting VPS subcomplex (VPS,) formed by VPS26 (VPS26A or VPS26B), VPS29 and VPS35. The CSC has a highly elongated structure with VPS26 and VPS29 binding independently at opposite distal ends of VPS35 as central platform. The CSC is believed to associate with variable sorting nexins to form functionally distinct retromer complex variants. The originally described retromer complex (also called SNX-BAR retromer) is a pentamer containing the CSC and a heterodimeric membrane-deforming subcomplex formed between SNX1 or SNX2 and SNX5 or SNX6 (also called SNX-BAR subcomplex); the respective CSC and SNX-BAR subcomplexes associate with low affinity. The CSC associates with SNX3 to form a SNX3-retromer complex. The CSC associates with SNX27, the WASH complex and the SNX-BAR subcomplex to form the SNX27-retromer complex. Interacts with VPS29, VPS35, TBC1D5, GOLPH3, SNX27.

It localises to the cytoplasm. The protein resides in the membrane. It is found in the early endosome. Its subcellular location is the late endosome. Its function is as follows. Acts as a component of the retromer cargo-selective complex (CSC). The CSC is believed to be the core functional component of retromer or respective retromer complex variants acting to prevent missorting of selected transmembrane cargo proteins into the lysosomal degradation pathway. The recruitment of the CSC to the endosomal membrane involves RAB7A and SNX3. The SNX-BAR retromer mediates retrograde transport of cargo proteins from endosomes to the trans-Golgi network (TGN) and is involved in endosome-to-plasma membrane transport for cargo protein recycling. The SNX3-retromer mediates the retrograde transport of WLS distinct from the SNX-BAR retromer pathway. The SNX27-retromer is believed to be involved in endosome-to-plasma membrane trafficking and recycling of a broad spectrum of cargo proteins. The CSC seems to act as recruitment hub for other proteins, such as the WASH complex and TBC1D5. May be involved in retrograde transport of SORT1 but not of IGF2R. Acts redundantly with VSP26A in SNX-27 mediated endocytic recycling of SLC2A1/GLUT1. The sequence is that of Vacuolar protein sorting-associated protein 26B (VPS26B) from Homo sapiens (Human).